Consider the following 119-residue polypeptide: Large ribosomal subunit protein bL20 (119 aa).

The protein belongs to the bacterial ribosomal protein bL20 family.

Functionally, binds directly to 23S ribosomal RNA and is necessary for the in vitro assembly process of the 50S ribosomal subunit. It is not involved in the protein synthesizing functions of that subunit. The chain is Large ribosomal subunit protein bL20 from Clostridium novyi (strain NT).